The sequence spans 147 residues: Antiholin-like protein LrgA (147 aa).

The next 4 membrane-spanning stretches (helical) occupy residues 12–32 (PAHF…SKII), 35–55 (FMPI…VLLC), 74–94 (NIGL…GVIS), and 98–118 (FLII…TGYV).

It belongs to the CidA/LrgA family. LrgA subfamily.

It is found in the cell membrane. Functionally, inhibits the expression or activity of extracellular murein hydrolases by interacting, possibly with LrgB, with the holin-like proteins CidA and/or CidB. The LrgAB and CidAB proteins may affect the proton motive force of the membrane. May be involved in programmed cell death (PCD), possibly triggering PCD in response to antibiotics and environmental stresses. The sequence is that of Antiholin-like protein LrgA from Staphylococcus aureus (strain MSSA476).